The chain runs to 625 residues: Probable potassium transport system protein Kup (625 aa).

12 helical membrane passes run 13-33 (TALA…LYAL), 53-73 (ILSI…VAIV), 103-123 (IYMI…GIIT), 141-161 (VFDP…FLVQ), 172-192 (FGPI…HSVI), 206-226 (AIQF…AVVL), 250-270 (WFFV…ALLL), 282-302 (LLVP…ATVI), 340-360 (IYVP…ILIF), 369-389 (AYGL…AVFI), 400-420 (VLIL…ATSL), and 422-442 (ILSG…ILMT).

It belongs to the HAK/KUP transporter (TC 2.A.72) family.

Its subcellular location is the cell inner membrane. The catalysed reaction is K(+)(in) + H(+)(in) = K(+)(out) + H(+)(out). Functionally, transport of potassium into the cell. Likely operates as a K(+):H(+) symporter. The polypeptide is Probable potassium transport system protein Kup (Acinetobacter baumannii (strain SDF)).